Here is a 718-residue protein sequence, read N- to C-terminus: Kinesin-2a (718 aa).

The Kinesin motor domain occupies 5–335; that stretch reads NIKVIVRCRP…LRYADRAKQI (331 aa). 97-104 is an ATP binding site; it reads GQTGAGKT. ADP contacts are provided by Gly100, Gly102, Lys103, Thr104, and Trp105. Thr104 is a binding site for Mg(2+). The stretch at 432 to 477 forms a coiled coil; the sequence is SRKAADELEAKRRALAEAKQKRESELEQKEALNKEAIVTLTDLKSQ.

The protein belongs to the TRAFAC class myosin-kinesin ATPase superfamily. Kinesin family. Kinesin II subfamily. As to quaternary structure, monomer.

The protein resides in the cell projection. It localises to the cilium. It is found in the flagellum. The protein localises to the cytoplasm. Its subcellular location is the cytoskeleton. The protein resides in the flagellum axoneme. It localises to the flagellum basal body. Its function is as follows. Involved in anterograde intraflagellar transport (IFT). Involved in flagellar assembly. The polypeptide is Kinesin-2a (Giardia intestinalis (strain ATCC 50803 / WB clone C6) (Giardia lamblia)).